The sequence spans 106 residues: Iron-sulfur cluster assembly protein CyaY (106 aa).

This sequence belongs to the frataxin family.

In terms of biological role, involved in iron-sulfur (Fe-S) cluster assembly. May act as a regulator of Fe-S biogenesis. In Escherichia coli O7:K1 (strain IAI39 / ExPEC), this protein is Iron-sulfur cluster assembly protein CyaY.